The following is an 86-amino-acid chain: Mitochondrial import inner membrane translocase subunit Tim10 (86 aa).

The Twin CX3C motif signature appears at 29 to 54; that stretch reads CQAKCIATAFRESELTKGEAVCLDRC. 2 cysteine pairs are disulfide-bonded: cysteine 29-cysteine 54 and cysteine 33-cysteine 50.

It belongs to the small Tim family. Heterohexamer; composed of 3 copies of tim-9/tin-9.1 and 3 copies of tim-10/tin-10, named soluble 70 kDa complex. The complex associates with the tim-22 component of the TIM22 complex. Interacts with multi-pass transmembrane proteins in transit.

The protein resides in the mitochondrion inner membrane. Its function is as follows. Mitochondrial intermembrane chaperone that participates in the import and insertion of multi-pass transmembrane proteins into the mitochondrial inner membrane. May also be required for the transfer of beta-barrel precursors from the TOM complex to the sorting and assembly machinery (SAM complex) of the outer membrane. Acts as a chaperone-like protein that protects the hydrophobic precursors from aggregation and guide them through the mitochondrial intermembrane space. The chain is Mitochondrial import inner membrane translocase subunit Tim10 (tin-10) from Caenorhabditis elegans.